A 543-amino-acid chain; its full sequence is CTP synthase (543 aa).

Residues 1–265 form an amidoligase domain region; the sequence is MTRFVFITGG…DTEVLRHFGL (265 aa). Position 13 (S13) interacts with CTP. S13 contributes to the UTP binding site. 14-19 is an ATP binding site; that stretch reads SLGKGI. Residue Y54 participates in L-glutamine binding. Position 71 (D71) interacts with ATP. Residues D71 and E139 each contribute to the Mg(2+) site. Residues 146-148, 186-191, and K222 each bind CTP; these read DIE and KTKPTQ. UTP contacts are provided by residues 186 to 191 and K222; that span reads KTKPTQ. One can recognise a Glutamine amidotransferase type-1 domain in the interval 291–542; it reads RIAVVGKYTA…VGAAVKKMRL (252 aa). G354 is a binding site for L-glutamine. The Nucleophile; for glutamine hydrolysis role is filled by C381. L-glutamine contacts are provided by residues 382–385, E405, and R470; that span reads FGMQ. Catalysis depends on residues H515 and E517.

This sequence belongs to the CTP synthase family. Homotetramer.

It catalyses the reaction UTP + L-glutamine + ATP + H2O = CTP + L-glutamate + ADP + phosphate + 2 H(+). It carries out the reaction L-glutamine + H2O = L-glutamate + NH4(+). The enzyme catalyses UTP + NH4(+) + ATP = CTP + ADP + phosphate + 2 H(+). It participates in pyrimidine metabolism; CTP biosynthesis via de novo pathway; CTP from UDP: step 2/2. Allosterically activated by GTP, when glutamine is the substrate; GTP has no effect on the reaction when ammonia is the substrate. The allosteric effector GTP functions by stabilizing the protein conformation that binds the tetrahedral intermediate(s) formed during glutamine hydrolysis. Inhibited by the product CTP, via allosteric rather than competitive inhibition. Its function is as follows. Catalyzes the ATP-dependent amination of UTP to CTP with either L-glutamine or ammonia as the source of nitrogen. Regulates intracellular CTP levels through interactions with the four ribonucleotide triphosphates. In Gluconacetobacter diazotrophicus (strain ATCC 49037 / DSM 5601 / CCUG 37298 / CIP 103539 / LMG 7603 / PAl5), this protein is CTP synthase.